Reading from the N-terminus, the 424-residue chain is Histidine--tRNA ligase (424 aa).

This sequence belongs to the class-II aminoacyl-tRNA synthetase family. Homodimer.

The protein localises to the cytoplasm. It catalyses the reaction tRNA(His) + L-histidine + ATP = L-histidyl-tRNA(His) + AMP + diphosphate + H(+). In Escherichia coli (strain 55989 / EAEC), this protein is Histidine--tRNA ligase.